The chain runs to 763 residues: MAGFDWFWKALGGKQGRNQKRSLAIVDQAEAHTRDLEALDDAHLAARARTLVGDGTPQDPAELLAVLGIAAHRTLGMRPFPVQSQAVLRLIEGDVVHMATGEGKTLVGAMAATGLGLQGKTVHSITINDYLAVRDAEWMRPLVEFFGLSVGAISETMTPEQRREAYRCDVVYGSVSEIGFDVLRDQLITRRADAVQRRADVAIIDEADSVLVDEALVPLVLAGNQPGHAPRGKITEVVRRLKENDHYTVSEDRRNVFLTDKGAAALEQALGITSLYDDEHVGTTLVQVNLALHAQALLIRDIHYIVRDGKVQLIDASRGRVADLQRWPDGLQAAVEAKEGLAVTEGGRILDTITLQALVGRYPMVCGMTGTAVEATDQLRTFYNLHVSVIERNNPLRRFDEADRIYATMAEKNRAIIEEIAHLHHTGQPVLVGTHDVAESEELADALRDLDIEVSVLNAKNDAEEARIIAEAGDIGRVTVSTQMAGRGTDVRLGGPDESHYDQVVELGGLAVIGTARHRTARLDNQLRGRAGRQGDPGLSLFFVSLEDDVVVTGGAGESVTAQPDATGLIDSNRVRDWVAHCQRVTEGQLLEIHSQTWKYNKLLADQRVIIDERRARLLDTDLAWRELSERAQDRAAGLEGVDREVLEQAARDIMLYHLDLNWSEHLALMDDVRESIHLRAIARETPLDEYHRIAVREFKTLAQQAVDDAVETFRTVVIDDRGAHLEDAGLARPSATWTYMVSDNPLAGSGNSVISGIGNIFR.

ATP-binding positions include Q83, 101 to 105 (GEGKT), and D490.

Belongs to the SecA family. In terms of assembly, monomer and homodimer. Part of the essential Sec protein translocation apparatus which comprises SecA, SecYEG and auxiliary proteins SecDF. Other proteins may also be involved.

It is found in the cell membrane. Its subcellular location is the cytoplasm. It carries out the reaction ATP + H2O + cellular proteinSide 1 = ADP + phosphate + cellular proteinSide 2.. Part of the Sec protein translocase complex. Interacts with the SecYEG preprotein conducting channel. Has a central role in coupling the hydrolysis of ATP to the transfer of proteins into and across the cell membrane, serving as an ATP-driven molecular motor driving the stepwise translocation of polypeptide chains across the membrane. The protein is Protein translocase subunit SecA 2 of Corynebacterium efficiens (strain DSM 44549 / YS-314 / AJ 12310 / JCM 11189 / NBRC 100395).